We begin with the raw amino-acid sequence, 255 residues long: Pyridoxine 5'-phosphate synthase (255 aa).

3-amino-2-oxopropyl phosphate is bound at residue Asn6. 8-9 (DH) provides a ligand contact to 1-deoxy-D-xylulose 5-phosphate. 3-amino-2-oxopropyl phosphate is bound at residue Arg17. His41 functions as the Proton acceptor in the catalytic mechanism. Residues Arg43 and His48 each coordinate 1-deoxy-D-xylulose 5-phosphate. Glu68 functions as the Proton acceptor in the catalytic mechanism. Thr96 is a binding site for 1-deoxy-D-xylulose 5-phosphate. His208 functions as the Proton donor in the catalytic mechanism. Residues Gly209 and 230 to 231 (GQ) each bind 3-amino-2-oxopropyl phosphate.

It belongs to the PNP synthase family. In terms of assembly, homooctamer; tetramer of dimers.

It localises to the cytoplasm. The catalysed reaction is 3-amino-2-oxopropyl phosphate + 1-deoxy-D-xylulose 5-phosphate = pyridoxine 5'-phosphate + phosphate + 2 H2O + H(+). It functions in the pathway cofactor biosynthesis; pyridoxine 5'-phosphate biosynthesis; pyridoxine 5'-phosphate from D-erythrose 4-phosphate: step 5/5. Its function is as follows. Catalyzes the complicated ring closure reaction between the two acyclic compounds 1-deoxy-D-xylulose-5-phosphate (DXP) and 3-amino-2-oxopropyl phosphate (1-amino-acetone-3-phosphate or AAP) to form pyridoxine 5'-phosphate (PNP) and inorganic phosphate. The sequence is that of Pyridoxine 5'-phosphate synthase from Campylobacter lari (strain RM2100 / D67 / ATCC BAA-1060).